Consider the following 441-residue polypeptide: Nuclear distribution protein nudF (441 aa).

A LisH domain is found at 9 to 41 (QAEELHKSIIAYLASVNLTESSAALRAELGDSV). WD repeat units follow at residues 87-128 (GHRE…RTVK), 130-170 (HTKA…KNIR), 174-221 (GHDH…CVKT), 224-263 (GHVD…TKST), 266-326 (GHEH…IKTL), 328-367 (GHDN…KCVR), 372-402 (AHGH…NGAP), and 403-440 (AATA…RIFA). Residues 390–415 (GGANGESETNGAPAATATTNGVRPDP) are disordered. A compositionally biased stretch (low complexity) spans 398–410 (TNGAPAATATTNG).

Belongs to the WD repeat LIS1/nudF family. In terms of assembly, self-associates. Interacts with nudE and dynein.

It localises to the cytoplasm. The protein localises to the cytoskeleton. Its subcellular location is the spindle pole. Positively regulates the activity of the minus-end directed microtubule motor protein dynein. May enhance dynein-mediated microtubule sliding by targeting dynein to the microtubule plus end. Required for nuclear migration during vegetative growth as well as development. Required for retrograde early endosome (EE) transport from the hyphal tip. Required for localization of dynein to the mitotic spindle poles. Recruits additional proteins to the dynein complex at SPBs. This is Nuclear distribution protein nudF from Neosartorya fischeri (strain ATCC 1020 / DSM 3700 / CBS 544.65 / FGSC A1164 / JCM 1740 / NRRL 181 / WB 181) (Aspergillus fischerianus).